A 140-amino-acid chain; its full sequence is Large ribosomal subunit protein uL11 (140 aa).

The protein belongs to the universal ribosomal protein uL11 family. As to quaternary structure, part of the ribosomal stalk of the 50S ribosomal subunit. Interacts with L10 and the large rRNA to form the base of the stalk. L10 forms an elongated spine to which L12 dimers bind in a sequential fashion forming a multimeric L10(L12)X complex. Post-translationally, one or more lysine residues are methylated.

Forms part of the ribosomal stalk which helps the ribosome interact with GTP-bound translation factors. In Symbiobacterium thermophilum (strain DSM 24528 / JCM 14929 / IAM 14863 / T), this protein is Large ribosomal subunit protein uL11.